Here is a 321-residue protein sequence, read N- to C-terminus: tRNA-dihydrouridine synthase B (321 aa).

Residues 16–18 (PMA) and Gln-70 each bind FMN. The active-site Proton donor is Cys-100. FMN-binding positions include Lys-139, 200 to 202 (NGD), and 224 to 225 (GR).

This sequence belongs to the Dus family. DusB subfamily. FMN is required as a cofactor.

The catalysed reaction is a 5,6-dihydrouridine in tRNA + NAD(+) = a uridine in tRNA + NADH + H(+). It carries out the reaction a 5,6-dihydrouridine in tRNA + NADP(+) = a uridine in tRNA + NADPH + H(+). Functionally, catalyzes the synthesis of 5,6-dihydrouridine (D), a modified base found in the D-loop of most tRNAs, via the reduction of the C5-C6 double bond in target uridines. The chain is tRNA-dihydrouridine synthase B from Pectobacterium carotovorum (Erwinia carotovora).